The sequence spans 396 residues: Elongation factor Tu (396 aa).

Positions 10 to 206 (KLHVNVGTIG…ALDTHIPNPE (197 aa)) constitute a tr-type G domain. Positions 19–26 (GHVDHGKT) are G1. 19–26 (GHVDHGKT) serves as a coordination point for GTP. Thr-26 is a Mg(2+) binding site. Residues 60-64 (GITIS) are G2. Residues 81 to 84 (DCPG) are G3. Residues 81-85 (DCPGH) and 136-139 (NKAD) contribute to the GTP site. Residues 136–139 (NKAD) form a G4 region. Positions 174–176 (SAL) are G5.

It belongs to the TRAFAC class translation factor GTPase superfamily. Classic translation factor GTPase family. EF-Tu/EF-1A subfamily. Monomer.

It is found in the cytoplasm. The enzyme catalyses GTP + H2O = GDP + phosphate + H(+). GTP hydrolase that promotes the GTP-dependent binding of aminoacyl-tRNA to the A-site of ribosomes during protein biosynthesis. The chain is Elongation factor Tu from Xylella fastidiosa (strain 9a5c).